The primary structure comprises 759 residues: Subtilisin-like protease SBT3.16 (759 aa).

Residues 1–33 form the signal peptide; it reads MELSSLIVPNNKKHFVVVFIGLVLIFKIALITA. The propeptide at 34-119 is activation peptide; it reads ANEKSQIYTV…VTRSKNMKLK (86 aa). In terms of domain architecture, Inhibitor I9 spans 41 to 118; sequence YTVHLGERQH…RVTRSKNMKL (78 aa). Positions 124-608 constitute a Peptidase S8 domain; sequence SDYLGLTSAA…GGLVNPVKVA (485 aa). Asp-153 serves as the catalytic Charge relay system. Asn-186 and Asn-209 each carry an N-linked (GlcNAc...) asparagine glycan. The active-site Charge relay system is His-229. An N-linked (GlcNAc...) asparagine glycan is attached at Asn-371. Catalysis depends on Ser-539, which acts as the Charge relay system. N-linked (GlcNAc...) asparagine glycans are attached at residues Asn-632 and Asn-711.

It belongs to the peptidase S8 family.

It is found in the secreted. This chain is Subtilisin-like protease SBT3.16, found in Arabidopsis thaliana (Mouse-ear cress).